The chain runs to 156 residues: B3 domain-containing protein At5g26805 (156 aa).

A DNA-binding region (TF-B3) is located at residues 57 to 155; that stretch reads KFQLPMEKIR…MFCFSVLDGR (99 aa).

It is found in the nucleus. This chain is B3 domain-containing protein At5g26805, found in Arabidopsis thaliana (Mouse-ear cress).